Consider the following 249-residue polypeptide: Proteasome subunit alpha type-7-1A (249 aa).

This sequence belongs to the peptidase T1A family. The 26S proteasome consists of a 20S proteasome core and two 19S regulatory subunits. The 20S proteasome core is composed of 28 subunits that are arranged in four stacked rings, resulting in a barrel-shaped structure. The two end rings are each formed by seven alpha subunits, and the two central rings are each formed by seven beta subunits. The catalytic chamber with the active sites is on the inside of the barrel. In terms of tissue distribution, testis specific.

The protein resides in the cytoplasm. It is found in the nucleus. Functionally, the proteasome is a multicatalytic proteinase complex which is characterized by its ability to cleave peptides with Arg, Phe, Tyr, Leu, and Glu adjacent to the leaving group at neutral or slightly basic pH. The proteasome has an ATP-dependent proteolytic activity. The polypeptide is Proteasome subunit alpha type-7-1A (Prosalpha4T1) (Drosophila melanogaster (Fruit fly)).